We begin with the raw amino-acid sequence, 651 residues long: MSGELNGNDTPTQAAMPAVGVPESVAFAEDAEQHNESMKTLVLGALGVVYGDIGTSPIYAFREALHAAASDGILARSDILGVVSLIFWALTLVVTIKYVLFVLRADNNGEGGILSLMALVRGALKGRPDLILGVGICGAALFFGDAVITPAISVLSAMEGLEIVAPDLTPFVVPITVVILVTLFSVQKLGTGKVAIVFGPIMALWFLALGASGLWHIFDDPTVMVALNPYYAVRFLMISPGIAFITVGAVFLAMTGAEALYADLGHFGRKPIVRAWLWIVFPCLLLNYFGQAAFILSHGEAAALPFFQMMPSFALLPMVLLATAATVIASQAVITGAYSVARQAVQLNILPRLEIQHTSEKLHGQIYIPRVNLLLGLAVVILVLGFEKSSNLAAAYGIAVTGNMLVTTVLLYIVMTRIWNWRVSRALPIIVGFLIIDIMFFGANIIKVHEGGWASIGIAAILVLIMWTWVRGTRHLFNKTRKAEVPLDLIVQQMTKRPPTIVPGTAVFLTGDPKSAPTALMHSLKHYKVLHENNVILTVVTASKPWVSSADRARVSQYNERFMQVTLTFGYMQQPNIPRALGICRKLGWKFDIMTTSFFLSRRSLKASAHSGLPLWQDKLFILLARTASDATEYFQIPTGRVVEIGTQVNL.

12 helical membrane passes run 41–61 (LVLG…IYAF), 82–102 (VVSL…VLFV), 130–150 (LILG…VITP), 163–183 (IVAP…LVTL), 194–214 (VAIV…ASGL), 235–255 (FLMI…LAMT), 276–296 (WLWI…AFIL), 309–329 (MMPS…TVIA), 366–386 (IYIP…VLGF), 395–415 (AYGI…YIVM), 426–446 (ALPI…ANII), and 450–470 (EGGW…WTWV).

The protein belongs to the HAK/KUP transporter (TC 2.A.72) family.

It is found in the cell inner membrane. It catalyses the reaction K(+)(in) + H(+)(in) = K(+)(out) + H(+)(out). In terms of biological role, transport of potassium into the cell. Likely operates as a K(+):H(+) symporter. This is Probable potassium transport system protein Kup from Brucella anthropi (strain ATCC 49188 / DSM 6882 / CCUG 24695 / JCM 21032 / LMG 3331 / NBRC 15819 / NCTC 12168 / Alc 37) (Ochrobactrum anthropi).